Reading from the N-terminus, the 294-residue chain is Transcription repressor OFP14 (294 aa).

Positions 49 to 60 (SFKHRRRSSKTR) are enriched in basic residues. Disordered stretches follow at residues 49-72 (SFKH…HQDS), 96-129 (DDQE…DDDD), and 141-185 (AVYD…SRST). Composition is skewed to basic and acidic residues over residues 61 to 72 (FSKEEPVYHQDS) and 96 to 117 (DDQE…RESS). Over residues 118–128 (SDDSDDDDDDD) the composition is skewed to acidic residues. Residues 164 to 185 (SSEGRPSMETTSTSSERQSRST) show a composition bias toward low complexity. One can recognise an OVATE domain in the interval 195–259 (VLRYTDEPQE…LSAFVDLIIA (65 aa)).

Interacts with KNAT2 and KNAT3. Expressed in roots, rosette and cauline leaves, shoots, stems, flower buds and siliques.

Its subcellular location is the nucleus. In terms of biological role, transcriptional repressor that may regulate multiple aspects of plant growth and development through the regulation of BEL1-LIKE (BLH) and KNOX TALE (KNAT) homeodomain transcription factors. In Arabidopsis thaliana (Mouse-ear cress), this protein is Transcription repressor OFP14 (OFP14).